Reading from the N-terminus, the 397-residue chain is Decapping and exoribonuclease protein (397 aa).

Residues arginine 58, glutamate 101, and 131–133 each bind substrate; that span reads WRG. Position 192 (glutamate 192) interacts with Mg(2+). The substrate site is built by cysteine 217 and glutamate 234. The Mg(2+) site is built by glutamate 234, aspartate 236, glutamate 253, and leucine 254. Substrate is bound by residues lysine 255 and glutamine 280. Threonine 392 carries the phosphothreonine modification. Serine 394 is modified (phosphoserine).

This sequence belongs to the DXO/Dom3Z family. Requires Mg(2+) as cofactor.

It is found in the nucleus. The catalysed reaction is a 5'-end triphospho-ribonucleoside in mRNA + H2O = a 5'-end phospho-ribonucleoside in mRNA + diphosphate + H(+). It carries out the reaction a 5'-end NAD(+)-phospho-ribonucleoside in mRNA + H2O = a 5'-end phospho-ribonucleoside in mRNA + NAD(+) + H(+). The enzyme catalyses a 5'-end NAD(+)-phospho-ribonucleoside in snoRNA + H2O = a 5'-end phospho-ribonucleoside in snoRNA + NAD(+) + H(+). It catalyses the reaction a 5'-end (N(7)-methyl 5'-triphosphoguanosine)-ribonucleoside-ribonucleotide in mRNA + H2O = a (N(7)-methyl 5'-triphosphoguanosine)-nucleoside + a 5'-end phospho-ribonucleoside in mRNA + H(+). The catalysed reaction is a 5'-end FAD-phospho-ribonucleoside in mRNA + H2O = a 5'-end phospho-ribonucleoside in mRNA + FAD + H(+). It carries out the reaction a 5'-end CoA-ribonucleoside in mRNA + H2O = 3'-dephospho-CoA + a 5'-end phospho-ribonucleoside in mRNA + H(+). In terms of biological role, decapping enzyme for NAD-capped RNAs: specifically hydrolyzes the nicotinamide adenine dinucleotide (NAD) cap from a subset of RNAs by removing the entire NAD moiety from the 5'-end of an NAD-capped RNA. The NAD-cap is present at the 5'-end of some RNAs and snoRNAs. In contrast to the canonical 5'-end N7 methylguanosine (m7G) cap, the NAD cap promotes mRNA decay. Preferentially acts on NAD-capped transcripts in response to environmental stress. Also acts as a non-canonical decapping enzyme that removes the entire cap structure of m7G capped or incompletely capped RNAs and mediates their subsequent degradation. Specifically degrades pre-mRNAs with a defective 5'-end m7G cap and is part of a pre-mRNA capping quality control. Has decapping activity toward incomplete 5'-end m7G cap mRNAs such as unmethylated 5'-end-capped RNA (cap0), while it has no activity toward 2'-O-ribose methylated m7G cap (cap1). In contrast to canonical decapping enzymes DCP2 and NUDT16, which cleave the cap within the triphosphate linkage, the decapping activity releases the entire cap structure GpppN and a 5'-end monophosphate RNA. Also has 5'-3' exoribonuclease activities: The 5'-end monophosphate RNA is then degraded by the 5'-3' exoribonuclease activity, enabling this enzyme to decap and degrade incompletely capped mRNAs. Also possesses RNA 5'-pyrophosphohydrolase activity by hydrolyzing the 5'-end triphosphate to release pyrophosphates. Exhibits decapping activity towards FAD-capped RNAs. Exhibits decapping activity towards dpCoA-capped RNAs in vitro. The protein is Decapping and exoribonuclease protein of Rattus norvegicus (Rat).